A 475-amino-acid chain; its full sequence is ATP synthase subunit beta (475 aa).

160-167 (GGAGVGKT) contributes to the ATP binding site.

It belongs to the ATPase alpha/beta chains family. F-type ATPases have 2 components, CF(1) - the catalytic core - and CF(0) - the membrane proton channel. CF(1) has five subunits: alpha(3), beta(3), gamma(1), delta(1), epsilon(1). CF(0) has three main subunits: a(1), b(2) and c(9-12). The alpha and beta chains form an alternating ring which encloses part of the gamma chain. CF(1) is attached to CF(0) by a central stalk formed by the gamma and epsilon chains, while a peripheral stalk is formed by the delta and b chains.

The protein resides in the cell membrane. The catalysed reaction is ATP + H2O + 4 H(+)(in) = ADP + phosphate + 5 H(+)(out). Produces ATP from ADP in the presence of a proton gradient across the membrane. The catalytic sites are hosted primarily by the beta subunits. The chain is ATP synthase subunit beta from Mycolicibacterium vanbaalenii (strain DSM 7251 / JCM 13017 / BCRC 16820 / KCTC 9966 / NRRL B-24157 / PYR-1) (Mycobacterium vanbaalenii).